The following is a 295-amino-acid chain: MVQLFHLTFTQGFFIGQLSVIVIVYIFLRFFLFCTKEELKNVQEESYPLSPSNEKSTTEFNDATHKVTPSLSEIYDVKTHEEESLDWFNVLVAQALSQIRQDAVSDDAALKKLQTLFNGKRKPSFLGPIHIKSISLGQRYPVFSNCRIQAQPDDTNGLRATMDLSLEDDIHFVVNTSAVLNVPRPAFAMLPVSLSVRIVHIRGKLSIYFSQSSKSAKRAYLNFTFDPDFDMGIEIQSLVGSRSKLQDIPKIAHIIETRIRKWFITRCVSPQFQQISIPNIWPSSAREGHRQKSTE.

The Lumenal portion of the chain corresponds to 1 to 12 (MVQLFHLTFTQG). A helical transmembrane segment spans residues 13–33 (FFIGQLSVIVIVYIFLRFFLF). The Cytoplasmic portion of the chain corresponds to 34–295 (CTKEELKNVQ…REGHRQKSTE (262 aa)). In terms of domain architecture, SMP-LTD spans 81-278 (EEESLDWFNV…SPQFQQISIP (198 aa)).

It belongs to the MMM1 family. In terms of assembly, homodimer. Component of the ER-mitochondria encounter structure (ERMES) or MDM complex, composed of mmm1, mdm10, mdm12 and mdm34. A mmm1 homodimer associates with one molecule of mdm12 on each side in a pairwise head-to-tail manner, and the SMP-LTD domains of mmm1 and mdm12 generate a continuous hydrophobic tunnel for phospholipid trafficking.

Its subcellular location is the endoplasmic reticulum membrane. Its function is as follows. Component of the ERMES/MDM complex, which serves as a molecular tether to connect the endoplasmic reticulum (ER) and mitochondria. Components of this complex are involved in the control of mitochondrial shape and protein biogenesis, and function in nonvesicular lipid trafficking between the ER and mitochondria. The mdm12-mmm1 subcomplex functions in the major beta-barrel assembly pathway that is responsible for biogenesis of all outer membrane beta-barrel proteins, and acts in a late step after the SAM complex. The mdm10-mdm12-mmm1 subcomplex further acts in the TOM40-specific pathway after the action of the mdm12-mmm1 complex. Essential for establishing and maintaining the structure of mitochondria and maintenance of mtDNA nucleoids. This is Maintenance of mitochondrial morphology protein 1 from Schizosaccharomyces japonicus (strain yFS275 / FY16936) (Fission yeast).